The chain runs to 360 residues: Peptide chain release factor 1 (360 aa).

N5-methylglutamine is present on Gln-235.

The protein belongs to the prokaryotic/mitochondrial release factor family. Post-translationally, methylated by PrmC. Methylation increases the termination efficiency of RF1.

It localises to the cytoplasm. Its function is as follows. Peptide chain release factor 1 directs the termination of translation in response to the peptide chain termination codons UAG and UAA. The polypeptide is Peptide chain release factor 1 (Burkholderia thailandensis (strain ATCC 700388 / DSM 13276 / CCUG 48851 / CIP 106301 / E264)).